We begin with the raw amino-acid sequence, 82 residues long: Vejovine (82 aa).

Positions 1–22 (MNAKTLFVVFLIGMLVTEQVEA) are cleaved as a signal peptide. A propeptide spanning residues 70–82 (MTLDEIVDAMYYD) is cleaved from the precursor.

It belongs to the non-disulfide-bridged peptide (NDBP) superfamily. Long chain multifunctional peptide (group 2) family. As to expression, expressed by the venom gland.

It is found in the secreted. Its subcellular location is the target cell membrane. In terms of biological role, displays significant potent antimicrobial activity against clinical isolates of Gram-negative multidrug resistant strains of E.coli, P.aeruginosa and A.baumanii with MIC values as low as 4.4 uM. Additionally, it displays low cytolytic and hemolytic activity against human erythrocytes reaching 50% hemolysis at 100 uM. This is Vejovine from Vaejovis mexicanus (Mexican scorpion).